The chain runs to 236 residues: Eukaryotic translation initiation factor 3 subunit J (236 aa).

A disordered region spans residues 1-65; sequence MADDWESAAD…APAKPKPNKA (65 aa). A compositionally biased stretch (acidic residues) spans 28 to 46; it reads GEDEDEDIKDSWEDEEEKK. A compositionally biased stretch (basic and acidic residues) spans 47–58; the sequence is DEEKPTKTEAPA.

Belongs to the eIF-3 subunit J family. As to quaternary structure, component of the eukaryotic translation initiation factor 3 (eIF-3) complex. The eIF-3 complex interacts with pix.

It localises to the cytoplasm. Functionally, component of the eukaryotic translation initiation factor 3 (eIF-3) complex, which is involved in protein synthesis of a specialized repertoire of mRNAs and, together with other initiation factors, stimulates binding of mRNA and methionyl-tRNAi to the 40S ribosome. The eIF-3 complex specifically targets and initiates translation of a subset of mRNAs involved in cell proliferation. The sequence is that of Eukaryotic translation initiation factor 3 subunit J from Drosophila melanogaster (Fruit fly).